A 204-amino-acid chain; its full sequence is Large ribosomal subunit protein uL4 (204 aa).

Residues 49–72 (QKNRAAVSGGGKKPWRQKGTGRAR) are disordered.

It belongs to the universal ribosomal protein uL4 family. As to quaternary structure, part of the 50S ribosomal subunit.

Its function is as follows. One of the primary rRNA binding proteins, this protein initially binds near the 5'-end of the 23S rRNA. It is important during the early stages of 50S assembly. It makes multiple contacts with different domains of the 23S rRNA in the assembled 50S subunit and ribosome. Forms part of the polypeptide exit tunnel. This is Large ribosomal subunit protein uL4 from Saccharophagus degradans (strain 2-40 / ATCC 43961 / DSM 17024).